The primary structure comprises 560 residues: Membrane-bound O-acyltransferase GUP1 (560 aa).

The Extracellular portion of the chain corresponds to 1 to 43; that stretch reads MSLISILSPLITSEGLDSRIKPSPKKDASTTTKPSLWKTTEFK. A helical membrane pass occupies residues 44 to 64; it reads FYYIAFLVVVPLMFYAGLQAS. Topologically, residues 65–101 are cytoplasmic; that stretch reads SPENPNYARYERLLSQGWLFGRKVDNSDSQYRFFRDN. The chain crosses the membrane as a helical span at residues 102–122; it reads FALLSVLMLVHTSIKRIVLYS. Residues 123–131 are Extracellular-facing; it reads TNITKLRFD. The helical transmembrane segment at 132-152 threads the bilayer; it reads LIFGLIFLVAAHGVNSIRILA. Residues 153-165 lie on the Cytoplasmic side of the membrane; the sequence is HMLILYAIAHVLK. A helical transmembrane segment spans residues 166–185; that stretch reads NFRRIATISIWIYGISTLFI. Residues 186 to 276 are Extracellular-facing; the sequence is NDNFRAYPFG…AAHPIQDYSL (91 aa). Residues 277–297 traverse the membrane as a helical segment; the sequence is MNYIAYVTYTPLFIAGPIITF. At 298–322 the chain is on the cytoplasmic side; sequence NDYVYQSKHTLPSINFKFIFYYAVR. The helical transmembrane segment at 323 to 343 threads the bilayer; sequence FVIALLSMEFILHFLHVVAIS. The Extracellular portion of the chain corresponds to 344–352; the sequence is KTKAWENDT. Residues 353–373 traverse the membrane as a helical segment; it reads PFQISMIGLFNLNIIWLKLLI. Residues 374 to 432 lie on the Cytoplasmic side of the membrane; that stretch reads PWRLFRLWALLDGIDTPENMIRCVDNNYSSLAFWRAWHRSYNKWVVRYIYIPLGGSKNR. A run of 2 helical transmembrane segments spans residues 433–453 and 454–474; these read VLTSLAVFSFVAIWHDIELKL and LLWGWLIVLFLLPEIFATQIF. The active site involves H447. At 475 to 485 the chain is on the cytoplasmic side; it reads SHYTDAVWYRH. The helical transmembrane segment at 486 to 506 threads the bilayer; sequence VCAVGAVFNIWVMMIANLFGF. Topologically, residues 507 to 526 are extracellular; it reads CLGSDGTKKLLSDMFCTVSG. The helical transmembrane segment at 527 to 547 threads the bilayer; sequence FKFVILASVSLFIAVQIMFEI. Topologically, residues 548 to 560 are cytoplasmic; it reads REEEKRHGIYLKC.

This sequence belongs to the membrane-bound acyltransferase family. As to quaternary structure, interacts with mitochondrial outer membrane voltage-dependent anion channel (VDAC) POR1.

The protein localises to the cell membrane. Its subcellular location is the endoplasmic reticulum membrane. The protein resides in the mitochondrion membrane. Its function is as follows. Membrane-bound O-acyltransferase involved in the remodeling of glycosylphosphatidylinositol (GPI) anchors. Acts only on GPI-anchored proteins, but not on free GPI lipids. Acts as an acyltransferase for GPI anchors that adds C26 fatty acids to the sn2 position of lyso-PI-containing GPI anchors. PER1 first deacylates, GUP1 subsequently reacylates the anchor lipid, thus replacing a shorter fatty acid (C16:0 or C18:0) by C26:0. Also involved in lipid metabolism, having profound effects on sphingolipid-sterol-ordered domains integrity and assembly. Together with GUP2, has an influence on the chemical composition of the yeast extracellular matrix (yECM) in yeast multicellular aggregates, such as biofilms and colonies. Involved in cell integrity and apoptosis. This chain is Membrane-bound O-acyltransferase GUP1 (GUP1), found in Saccharomyces cerevisiae (strain ATCC 204508 / S288c) (Baker's yeast).